Consider the following 148-residue polypeptide: Large-conductance mechanosensitive channel (148 aa).

The next 2 membrane-spanning stretches (helical) occupy residues Ala-9–Phe-29 and Ile-79–Ile-99.

This sequence belongs to the MscL family. Homopentamer.

It is found in the cell inner membrane. Its function is as follows. Channel that opens in response to stretch forces in the membrane lipid bilayer. May participate in the regulation of osmotic pressure changes within the cell. The sequence is that of Large-conductance mechanosensitive channel from Pseudomonas savastanoi pv. phaseolicola (strain 1448A / Race 6) (Pseudomonas syringae pv. phaseolicola (strain 1448A / Race 6)).